We begin with the raw amino-acid sequence, 576 residues long: Catalase-peroxidase (576 aa).

The tryptophyl-tyrosyl-methioninium (Trp-Tyr) (with M-250) cross-link spans 95–224; the sequence is WHAAGSYRAA…LAAVQMGLIY (130 aa). Histidine 96 (proton acceptor) is an active-site residue. Residues 224–250 constitute a cross-link (tryptophyl-tyrosyl-methioninium (Tyr-Met) (with W-95)); that stretch reads YVNPEGVNGQPDPARTALHIRETFARM. Residue histidine 265 participates in heme b binding.

It belongs to the peroxidase family. Peroxidase/catalase subfamily. In terms of assembly, homotetramer. Heme b is required as a cofactor. In terms of processing, formation of the three residue Trp-Tyr-Met cross-link is important for the catalase, but not the peroxidase activity of the enzyme.

It carries out the reaction H2O2 + AH2 = A + 2 H2O. The enzyme catalyses 2 H2O2 = O2 + 2 H2O. In terms of biological role, bifunctional enzyme with both catalase and broad-spectrum peroxidase activity. Also displays NADH oxidase, INH lyase and isonicotinoyl-NAD synthase activities. Important for stationary phase survival. In Rhodobacter capsulatus (Rhodopseudomonas capsulata), this protein is Catalase-peroxidase (katG).